The following is a 451-amino-acid chain: Serine--tRNA ligase (451 aa).

258 to 260 (TSE) lines the L-serine pocket. Residue 289–291 (RSE) participates in ATP binding. An L-serine-binding site is contributed by Glu312. 376-379 (EISS) lines the ATP pocket. Ser411 serves as a coordination point for L-serine.

Belongs to the class-II aminoacyl-tRNA synthetase family. Type-1 seryl-tRNA synthetase subfamily. As to quaternary structure, homodimer. The tRNA molecule binds across the dimer.

The protein resides in the cytoplasm. The catalysed reaction is tRNA(Ser) + L-serine + ATP = L-seryl-tRNA(Ser) + AMP + diphosphate + H(+). The enzyme catalyses tRNA(Sec) + L-serine + ATP = L-seryl-tRNA(Sec) + AMP + diphosphate + H(+). It participates in aminoacyl-tRNA biosynthesis; selenocysteinyl-tRNA(Sec) biosynthesis; L-seryl-tRNA(Sec) from L-serine and tRNA(Sec): step 1/1. Catalyzes the attachment of serine to tRNA(Ser). Is also able to aminoacylate tRNA(Sec) with serine, to form the misacylated tRNA L-seryl-tRNA(Sec), which will be further converted into selenocysteinyl-tRNA(Sec). The sequence is that of Serine--tRNA ligase from Bordetella pertussis (strain Tohama I / ATCC BAA-589 / NCTC 13251).